The sequence spans 288 residues: Phosphatidylserine decarboxylase proenzyme (288 aa).

Active-site charge relay system; for autoendoproteolytic cleavage activity residues include aspartate 90, histidine 147, and serine 254. The Schiff-base intermediate with substrate; via pyruvic acid; for decarboxylase activity role is filled by serine 254. Pyruvic acid (Ser); by autocatalysis is present on serine 254.

Belongs to the phosphatidylserine decarboxylase family. PSD-B subfamily. Prokaryotic type I sub-subfamily. In terms of assembly, heterodimer of a large membrane-associated beta subunit and a small pyruvoyl-containing alpha subunit. Pyruvate is required as a cofactor. In terms of processing, is synthesized initially as an inactive proenzyme. Formation of the active enzyme involves a self-maturation process in which the active site pyruvoyl group is generated from an internal serine residue via an autocatalytic post-translational modification. Two non-identical subunits are generated from the proenzyme in this reaction, and the pyruvate is formed at the N-terminus of the alpha chain, which is derived from the carboxyl end of the proenzyme. The autoendoproteolytic cleavage occurs by a canonical serine protease mechanism, in which the side chain hydroxyl group of the serine supplies its oxygen atom to form the C-terminus of the beta chain, while the remainder of the serine residue undergoes an oxidative deamination to produce ammonia and the pyruvoyl prosthetic group on the alpha chain. During this reaction, the Ser that is part of the protease active site of the proenzyme becomes the pyruvoyl prosthetic group, which constitutes an essential element of the active site of the mature decarboxylase.

It is found in the cell membrane. It carries out the reaction a 1,2-diacyl-sn-glycero-3-phospho-L-serine + H(+) = a 1,2-diacyl-sn-glycero-3-phosphoethanolamine + CO2. Its pathway is phospholipid metabolism; phosphatidylethanolamine biosynthesis; phosphatidylethanolamine from CDP-diacylglycerol: step 2/2. Functionally, catalyzes the formation of phosphatidylethanolamine (PtdEtn) from phosphatidylserine (PtdSer). This is Phosphatidylserine decarboxylase proenzyme from Hamiltonella defensa subsp. Acyrthosiphon pisum (strain 5AT).